A 554-amino-acid polypeptide reads, in one-letter code: Tetratricopeptide repeat protein 34 (554 aa).

TPR repeat units follow at residues 38-71, 166-199, 200-233, 294-327, 328-361, 411-445, 452-485, and 500-533; these read ETSC…RPQA, SESL…EPGN, VKAL…DPGT, PSWR…TPSS, EAAQ…DTQD, NPYH…PAED, SEDF…APAQ, and ASVF…DPSH.

This is Tetratricopeptide repeat protein 34 (Ttc34) from Mus musculus (Mouse).